The following is a 184-amino-acid chain: Acireductone dioxygenase (184 aa).

Fe(2+) contacts are provided by His-87, His-89, Glu-93, and His-137. Ni(2+) contacts are provided by His-87, His-89, Glu-93, and His-137.

Belongs to the acireductone dioxygenase (ARD) family. Fe(2+) is required as a cofactor. It depends on Ni(2+) as a cofactor.

The protein localises to the cytoplasm. The protein resides in the nucleus. The catalysed reaction is 1,2-dihydroxy-5-(methylsulfanyl)pent-1-en-3-one + O2 = 4-methylsulfanyl-2-oxobutanoate + formate + 2 H(+). It carries out the reaction 1,2-dihydroxy-5-(methylsulfanyl)pent-1-en-3-one + O2 = 3-(methylsulfanyl)propanoate + CO + formate + 2 H(+). It functions in the pathway amino-acid biosynthesis; L-methionine biosynthesis via salvage pathway; L-methionine from S-methyl-5-thio-alpha-D-ribose 1-phosphate: step 5/6. In terms of biological role, catalyzes 2 different reactions between oxygen and the acireductone 1,2-dihydroxy-3-keto-5-methylthiopentene (DHK-MTPene) depending upon the metal bound in the active site. Fe-containing acireductone dioxygenase (Fe-ARD) produces formate and 2-keto-4-methylthiobutyrate (KMTB), the alpha-ketoacid precursor of methionine in the methionine recycle pathway. Ni-containing acireductone dioxygenase (Ni-ARD) produces methylthiopropionate, carbon monoxide and formate, and does not lie on the methionine recycle pathway. The chain is Acireductone dioxygenase from Ciona intestinalis (Transparent sea squirt).